The primary structure comprises 239 residues: MSQKQRIDQQPAFVLHTYPWRETSLVVEIFSRDHGRVALVAKGARRPMSALRGVIMAFQPLLMDWSGGGEVKTLVRAEWRGGQPLLTGRALMCGYYLNELLVRLTAREDAHPALFEAYADALSQLGRGDVAPILRRFELTLLRELGYGIGLDLEGDSNRPVDPVQQYVYIIEKGPVRLAGDDEGLPGVSGQTLLDMAHGDFSRAETLFQSKALLRLLINHYLGGQPLQSRRVLKELQEL.

This sequence belongs to the RecO family.

Involved in DNA repair and RecF pathway recombination. This Aromatoleum aromaticum (strain DSM 19018 / LMG 30748 / EbN1) (Azoarcus sp. (strain EbN1)) protein is DNA repair protein RecO.